Reading from the N-terminus, the 89-residue chain is Cell division topological specificity factor (89 aa).

It belongs to the MinE family.

In terms of biological role, prevents the cell division inhibition by proteins MinC and MinD at internal division sites while permitting inhibition at polar sites. This ensures cell division at the proper site by restricting the formation of a division septum at the midpoint of the long axis of the cell. The protein is Cell division topological specificity factor of Brucella anthropi (strain ATCC 49188 / DSM 6882 / CCUG 24695 / JCM 21032 / LMG 3331 / NBRC 15819 / NCTC 12168 / Alc 37) (Ochrobactrum anthropi).